The chain runs to 669 residues: Threonine--tRNA ligase (669 aa).

The TGS domain occupies 3–60 (DAQQITLIVDGEETKVTEGTTGAELFFERRDVVVARVNGVLKDLDQVLTEGADVEGVT). The tract at residues 260–566 (DHRKLGVELD…LTEHYAGAFP (307 aa)) is catalytic. Cys-365, His-416, and His-543 together coordinate Zn(2+).

Belongs to the class-II aminoacyl-tRNA synthetase family. As to quaternary structure, homodimer. Zn(2+) is required as a cofactor.

The protein localises to the cytoplasm. It catalyses the reaction tRNA(Thr) + L-threonine + ATP = L-threonyl-tRNA(Thr) + AMP + diphosphate + H(+). Functionally, catalyzes the attachment of threonine to tRNA(Thr) in a two-step reaction: L-threonine is first activated by ATP to form Thr-AMP and then transferred to the acceptor end of tRNA(Thr). Also edits incorrectly charged L-seryl-tRNA(Thr). This is Threonine--tRNA ligase from Paenarthrobacter aurescens (strain TC1).